We begin with the raw amino-acid sequence, 256 residues long: uncharacterized protein (256 aa).

A disordered region spans residues 1–23 (MIPPCENAPHIIYHESQRGTRDR). Basic and acidic residues predominate over residues 12–23 (IYHESQRGTRDR).

This is an uncharacterized protein from Homo sapiens (Human).